A 252-amino-acid chain; its full sequence is 2-succinyl-6-hydroxy-2,4-cyclohexadiene-1-carboxylate synthase (252 aa).

This sequence belongs to the AB hydrolase superfamily. MenH family. Monomer.

The enzyme catalyses 5-enolpyruvoyl-6-hydroxy-2-succinyl-cyclohex-3-ene-1-carboxylate = (1R,6R)-6-hydroxy-2-succinyl-cyclohexa-2,4-diene-1-carboxylate + pyruvate. It functions in the pathway quinol/quinone metabolism; 1,4-dihydroxy-2-naphthoate biosynthesis; 1,4-dihydroxy-2-naphthoate from chorismate: step 3/7. The protein operates within quinol/quinone metabolism; menaquinone biosynthesis. Functionally, catalyzes a proton abstraction reaction that results in 2,5-elimination of pyruvate from 2-succinyl-5-enolpyruvyl-6-hydroxy-3-cyclohexene-1-carboxylate (SEPHCHC) and the formation of 2-succinyl-6-hydroxy-2,4-cyclohexadiene-1-carboxylate (SHCHC). The chain is 2-succinyl-6-hydroxy-2,4-cyclohexadiene-1-carboxylate synthase from Escherichia coli (strain SE11).